The primary structure comprises 115 residues: MNLVIALLINTGLATILVMVAFWLPQLYTYLEKSSPYECGFDPLGSARLPFSMKFFLVAITFLLFDLEIAILLPIPWASQTSSPYSLLSLSGVLLALLTLGLAYEWLQKGLEWTE.

The next 3 membrane-spanning stretches (helical) occupy residues 3–23 (LVIALLINTGLATILVMVAFW), 55–75 (FFLVAITFLLFDLEIAILLPI), and 87–107 (LLSLSGVLLALLTLGLAYEWL).

It belongs to the complex I subunit 3 family. Core subunit of respiratory chain NADH dehydrogenase (Complex I) which is composed of 45 different subunits. Interacts with TMEM186. Interacts with TMEM242.

It localises to the mitochondrion inner membrane. The enzyme catalyses a ubiquinone + NADH + 5 H(+)(in) = a ubiquinol + NAD(+) + 4 H(+)(out). Its function is as follows. Core subunit of the mitochondrial membrane respiratory chain NADH dehydrogenase (Complex I) which catalyzes electron transfer from NADH through the respiratory chain, using ubiquinone as an electron acceptor. Essential for the catalytic activity of complex I. The sequence is that of NADH-ubiquinone oxidoreductase chain 3 from Ornithorhynchus anatinus (Duckbill platypus).